We begin with the raw amino-acid sequence, 1321 residues long: Bile salt export pump (1321 aa).

At 1–62 (MSDSVILRSV…FSSSKDNWLM (62 aa)) the chain is on the cytoplasmic side. In terms of domain architecture, ABC transmembrane type-1 1 spans 62-385 (MFMGSVCALL…ASSCLEIFST (324 aa)). A helical membrane pass occupies residues 63 to 83 (FMGSVCALLHGMAQPGMIIVF). The Extracellular portion of the chain corresponds to 84 to 147 (GILTDIFVEY…VIKFSGIYAG (64 aa)). Residues Asn-109, Asn-116, Asn-122, and Asn-125 are each glycosylated (N-linked (GlcNAc...) asparagine). A helical membrane pass occupies residues 148–168 (VGVAVLILGYFQIRLWVITGA). The Cytoplasmic segment spans residues 169–215 (RQIRKMRKFYFRRIMRMEIGWFDCTSVGELNSRFSDDINKIDEAIAD). The chain crosses the membrane as a helical span at residues 216–236 (QMALFLQRLSTALSGLLLGFY). Over 237–240 (RGWK) the chain is Extracellular. The helical transmembrane segment at 241–261 (LTLVILAVSPLIGIGAAVIGL) threads the bilayer. The Cytoplasmic portion of the chain corresponds to 262–319 (SVAKFTELELKAYAKAGSIADEVLSSIRTVAAFGGENKEVERYEKNLMFAQRWGIWKG). Residues 320–340 (MVMGFFTGYMWCLIFFCYALA) form a helical membrane-spanning segment. The Extracellular portion of the chain corresponds to 341 to 353 (FWYGSRLVLDEGE). A helical membrane pass occupies residues 354–374 (YTPGTLIQIFLCVIIAAMNIG). Topologically, residues 375–755 (NASSCLEIFS…KYNISEWPYI (381 aa)) are cytoplasmic. Positions 420-656 (IEFHNVTFHY…KGVYFMLVTL (237 aa)) constitute an ABC transporter 1 domain. 455–462 (GSSGAGKS) contributes to the ATP binding site. Thr-586 carries the post-translational modification Phosphothreonine. Ser-587 carries the post-translational modification Phosphoserine. Positions 651–674 (FMLVTLQSQEDNTHKETGIKGKDT) are interaction with HAX1. Over residues 662-684 (NTHKETGIKGKDTTEGDTPERTF) the composition is skewed to basic and acidic residues. Residues 662–722 (NTHKETGIKG…PLAIGDHKSS (61 aa)) form a disordered region. Phosphoserine is present on residues Ser-692, Ser-703, and Ser-706. An ABC transmembrane type-1 2 domain is found at 755-1043 (ILVGALCAAI…TFSYTPSYAK (289 aa)). A helical transmembrane segment spans residues 756–776 (LVGALCAAINGAVTPIYSLLF). Topologically, residues 777 to 794 (SQILKTFSLVDKEQQRSE) are extracellular. The chain crosses the membrane as a helical span at residues 795 to 815 (IYSMCLFFVILGCVSLFTQFL). Topologically, residues 816 to 869 (QGYNFAKSGELLTKRLRKFGFKAMLRQDIGWFDDLKNNPGVLTTRLATDASQVQ) are cytoplasmic. The next 2 membrane-spanning stretches (helical) occupy residues 870–890 (GATGSQVGMMVNSFTNIFVAV) and 891–911 (LIAFLFNWKLSLVISVFFPFL). Residues 912 to 979 (ALSGAVQTKM…SYKTAIRKAN (68 aa)) lie on the Cytoplasmic side of the membrane. Residues 980 to 1000 (VYGLCYAFSQGISFLANSAAY) form a helical membrane-spanning segment. Topologically, residues 1001-1011 (RYGGYLIVYED) are extracellular. The helical transmembrane segment at 1012-1032 (LNFSYVFRVVSSIAMSATAVG) threads the bilayer. Over 1033 to 1321 (RTFSYTPSYA…KLVITGAPIS (289 aa)) the chain is Cytoplasmic. Residues 1078 to 1316 (IDFIDCKFTY…KGAYYKLVIT (239 aa)) form the ABC transporter 2 domain. Position 1113 to 1120 (1113 to 1120 (GSSGCGKS)) interacts with ATP. Ser-1321 carries the phosphoserine modification.

Belongs to the ABC transporter superfamily. ABCB family. Multidrug resistance exporter (TC 3.A.1.201) subfamily. In terms of assembly, interacts with HAX1. Interacts with the adapter protein complex 2 (AP-2) throught AP2A2 or AP2A1; this interaction regulates cell membrane expression of ABCB11 through its internalization in a clathrin-dependent manner and its subsequent degradation. N-glycosylated. Post-translationally, ubiquitinated; short-chain ubiquitination regulates cell-Surface expression of ABCB11. Expressed predominantly, if not exclusively in the liver, where it was further localized to the canalicular microvilli and to subcanalicular vesicles of the hepatocytes by in situ.

It is found in the apical cell membrane. Its subcellular location is the recycling endosome membrane. The protein resides in the endosome. The protein localises to the cell membrane. The enzyme catalyses cholate(in) + ATP + H2O = cholate(out) + ADP + phosphate + H(+). It catalyses the reaction taurocholate(in) + ATP + H2O = taurocholate(out) + ADP + phosphate + H(+). The catalysed reaction is glycocholate(in) + ATP + H2O = glycocholate(out) + ADP + phosphate + H(+). It carries out the reaction glycochenodeoxycholate(in) + ATP + H2O = glycochenodeoxycholate(out) + ADP + phosphate + H(+). The enzyme catalyses taurochenodeoxycholate(in) + ATP + H2O = taurochenodeoxycholate(out) + ADP + phosphate + H(+). It catalyses the reaction glycoursodeoxycholate(in) + ATP + H2O = glycoursodeoxycholate(out) + ADP + phosphate + H(+). The catalysed reaction is tauroursodeoxycholate(in) + ATP + H2O = tauroursodeoxycholate(out) + ADP + phosphate + H(+). It carries out the reaction taurodeoxycholate(in) + ATP + H2O = taurodeoxycholate(out) + ADP + phosphate + H(+). The enzyme catalyses taurolithocholate 3-sulfate(in) + ATP + H2O = taurolithocholate 3-sulfate(out) + ADP + phosphate + H(+). It catalyses the reaction pravastatin(in) + ATP + H2O = pravastatin(out) + ADP + phosphate + H(+). With respect to regulation, the uptake of taurocholate is inhibited by taurolithocholate sulfate with an IC(50) of 9 uM. Pravastatin competitively inhibits the transport of taurocholic acid. Cyclosporin A, glibenclamide, rifampicin and troglitazonestrongly competitively inhibit the transport activity of taurocholate. The canalicular transport activity of taurocholate is strongly dependent on canalicular membrane cholesterol content. The uptake of taurocholate is increased by short- and medium-chain fatty acids. Cholesterol increases transport capacity of taurocholate without affecting the affinity for the substrate. In terms of biological role, catalyzes the transport of the major hydrophobic bile salts, such as taurine and glycine-conjugated cholic acid across the canalicular membrane of hepatocytes in an ATP-dependent manner, therefore participates in hepatic bile acid homeostasis and consequently to lipid homeostasis through regulation of biliary lipid secretion in a bile salts dependent manner. Transports taurine-conjugated bile salts more rapidly than glycine-conjugated bile salts. Also transports non-bile acid compounds, such as pravastatin and fexofenadine in an ATP-dependent manner and may be involved in their biliary excretion. The sequence is that of Bile salt export pump from Mus musculus (Mouse).